Here is a 194-residue protein sequence, read N- to C-terminus: Holliday junction branch migration complex subunit RuvA (194 aa).

The domain I stretch occupies residues 1-63; the sequence is MFEYLYGTVE…EDTYKLIGFL (63 aa). A domain II region spans residues 64 to 142; it reads DERDRKIFEL…NLTYTEEETV (79 aa). The segment at 143 to 147 is flexible linker; the sequence is SMDML. Residues 147–194 are domain III; sequence LEDLVLALEGLGYNKKEIDKTLEKIDLNKFSSLEDAIKGILKNMRIGD.

Belongs to the RuvA family. Homotetramer. Forms an RuvA(8)-RuvB(12)-Holliday junction (HJ) complex. HJ DNA is sandwiched between 2 RuvA tetramers; dsDNA enters through RuvA and exits via RuvB. An RuvB hexamer assembles on each DNA strand where it exits the tetramer. Each RuvB hexamer is contacted by two RuvA subunits (via domain III) on 2 adjacent RuvB subunits; this complex drives branch migration. In the full resolvosome a probable DNA-RuvA(4)-RuvB(12)-RuvC(2) complex forms which resolves the HJ.

Its subcellular location is the cytoplasm. Its function is as follows. The RuvA-RuvB-RuvC complex processes Holliday junction (HJ) DNA during genetic recombination and DNA repair, while the RuvA-RuvB complex plays an important role in the rescue of blocked DNA replication forks via replication fork reversal (RFR). RuvA specifically binds to HJ cruciform DNA, conferring on it an open structure. The RuvB hexamer acts as an ATP-dependent pump, pulling dsDNA into and through the RuvAB complex. HJ branch migration allows RuvC to scan DNA until it finds its consensus sequence, where it cleaves and resolves the cruciform DNA. This Fusobacterium nucleatum subsp. nucleatum (strain ATCC 25586 / DSM 15643 / BCRC 10681 / CIP 101130 / JCM 8532 / KCTC 2640 / LMG 13131 / VPI 4355) protein is Holliday junction branch migration complex subunit RuvA.